Here is a 106-residue protein sequence, read N- to C-terminus: Cell division protein FtsB (106 aa).

Residues 1-3 (MRL) are Cytoplasmic-facing. A helical membrane pass occupies residues 4 to 21 (LTLIFVALIALLQYPLWL). Over 22–106 (GKGSWLRVWD…SPPAALTGAQ (85 aa)) the chain is Periplasmic. A coiled-coil region spans residues 31–73 (DLNQKIVAQKAVNAELKLRNDTLDAEVRDLKQGNAAIEERARS).

It belongs to the FtsB family. Part of a complex composed of FtsB, FtsL and FtsQ.

The protein resides in the cell inner membrane. In terms of biological role, essential cell division protein. May link together the upstream cell division proteins, which are predominantly cytoplasmic, with the downstream cell division proteins, which are predominantly periplasmic. This chain is Cell division protein FtsB, found in Methylobacillus flagellatus (strain ATCC 51484 / DSM 6875 / VKM B-1610 / KT).